The chain runs to 5376 residues: Zonadhesin (5376 aa).

An N-terminal signal peptide occupies residues 1-17 (MALPVWTLMLLVGAAWG). At 18–5310 (QEQVPAWRPN…TTRKKIEASS (5293 aa)) the chain is on the extracellular side. 3 consecutive MAM domains span residues 45–210 (SKCD…TCNQ), 215–374 (QMCT…PCGE), and 377–542 (PQCD…PCRV). 2 N-linked (GlcNAc...) asparagine glycosylation sites follow: Asn-339 and Asn-499. An 80 X heptapeptide repeats (approximate) (mucin-like domain) region spans residues 547 to 1170 (EIPSSPLLPP…PTTGVSTTES (624 aa)). 2 disordered regions span residues 553–579 (LLPPTGPSESTVPTLPMEQPTSPTKAT) and 1037–1113 (TVPP…TVST). The segment covering 1052–1113 (TEVTTTPPEE…IASEETTVST (62 aa)) has biased composition (low complexity). The 50-residue stretch at 1171–1220 (CPPNAHIELCACPASCESPKPSCQPPCIPGCVCNPGFLFSNNQCINESSC) folds into the TIL 1 domain. Asn-1216, Asn-1239, and Asn-1314 each carry an N-linked (GlcNAc...) asparagine glycan. Residues 1227–1275 (KHYKPGEEWFTPNCTERCRCLPGSLMECQISQCGTHTVCQLKSDQYQCE) form the VWFC 1 domain. Positions 1280 to 1462 (ATCLVYGDLH…DKDWVSSRCQ (183 aa)) constitute a VWFD 1 domain. Cystine bridges form between Cys-1282–Cys-1417 and Cys-1304–Cys-1461. Residues 1555-1608 (CPKNSRYSLCAKPCPETCHPISTTQHCSDKCVEGCECDPGFILSGSECVPSSQC) enclose the TIL 2 domain. Positions 1609–1664 (GCTSFQGRYFKLQEQWFNPDCKEICTCESHNHILCKPWKCKAQEACSYKNGVLGCH) constitute a VWFC 2 domain. Residues 1669 to 1849 (ATCMVSGDPH…ILEASDPGCF (181 aa)) enclose the VWFD 2 domain. Cystine bridges form between Cys-1671-Cys-1809 and Cys-1693-Cys-1848. 3 N-linked (GlcNAc...) asparagine glycosylation sites follow: Asn-1814, Asn-1908, and Asn-1933. In terms of domain architecture, TIL 3 spans 1941-1995 (CPPRSSYNPCANSCPATCLTLSTPRDCPTLPCVEGCECQSGHILSGTTCVPLRQC). The 57-residue stretch at 1996-2052 (GCSDQDGSYHLLGESWYTEKTCTTLCTCSAHSNITCSPTACKANHVCLRQEGLLRCA) folds into the VWFC 3 domain. Asn-2028, Asn-2111, Asn-2142, and Asn-2332 each carry an N-linked (GlcNAc...) asparagine glycan. Residues 2056–2239 (GECRISEDSQ…KDKSMDPNCQ (184 aa)) enclose the VWFD 3 domain. 2 disulfide bridges follow: Cys-2058/Cys-2200 and Cys-2080/Cys-2238. A TIL 4 domain is found at 2340 to 2398 (CPAHSHYTNCLPSCPPSCLDPDSRCEGSGHKVPATCREGCICQPDYVLLNDKCVLRSHC). Positions 2399 to 2454 (GCKDAQGVFIPAGKTWISEDCTQSCTCMKGSMRCWDFQCPPGTYCKNSNDGSSNCV) constitute a VWFC 4 domain. The TIL 5 domain maps to 2460–2518 (CPAHSKFTDCLPPCHPSCSDPDGHCEGISTNAHSNCKEGCVCQPGYVLRNDKCVLRIEC). A VWFC 5 domain is found at 2519–2574 (GCQHTQGGFIPAGKNWTSRGCSQSCDCMEGVIRCQNFQCPSGTYCQDIEDGTSNCA). N-linked (GlcNAc...) asparagine glycosylation is found at Asn-2533 and Asn-2575. The TIL 6 domain occupies 2580 to 2638 (CPAHSSFTNCLPPCQPSCSDPEGHCGGSTTKAPSACQEGCVCEPDYVVLNNKCVPRIEC). One can recognise a VWFC 6 domain in the interval 2639–2694 (GCKDAQGVLIPADKIWINKGCTQTCACVTGTIHCRDFQCPSGTYCKDIKDDASNCT). Asn-2692 carries N-linked (GlcNAc...) asparagine glycosylation. The 59-residue stretch at 2700-2758 (CPDHSLYTHCLPSCLLSCSDPDGLCRGTSPEAPSTCKEGCVCDPDYVLSNDKCVLRIEC) folds into the TIL 7 domain. A VWFC 7 domain is found at 2759-2814 (GCKDAQGVLIPAGKTWINRGCTQSCSCMGGAIQCQNFKCPSEAYCQDMEDGNSNCT). N-linked (GlcNAc...) asparagine glycosylation occurs at Asn-2812. Residues 2820–2878 (CPAHSHYTNCLPTCQPSCSDPDGHCEGSSTKAPSACKEGCVCEPDYVMLNNKCVPRIEC) enclose the TIL 8 domain. The 56-residue stretch at 2879–2934 (GCKDTQGVLIPADKTWINRGCTQSCTCRGGAIQCQKYHCSSGTYCKDMEDDSSSCA) folds into the VWFC 8 domain. One can recognise a TIL 9 domain in the interval 2940 to 2998 (CPAHSHFTNCLPPCQPSCLDSEGHCEGSTTKAPSACQEGCVCEPDYVVLNNKCVPRIEC). In terms of domain architecture, VWFC 9 spans 2999–3054 (GCKDAQGVLIPADKTWINRGCTQSCTCKGGAIQCQKFQCPSETYCKDIEDGNSNCT). 4 N-linked (GlcNAc...) asparagine glycosylation sites follow: Asn-3052, Asn-3065, Asn-3144, and Asn-3172. Residues 3060 to 3118 (CPANSNFTSCLPSCQPSCSNTDVHCEGSSPNTLSSCREGCVCQSGYVLHNDKCILRNQC) enclose the TIL 10 domain. One can recognise a VWFC 10 domain in the interval 3119–3174 (GCKDAQGALIPEGKTWITSGCTQSCNCTGGAIQCQNFQCPLKTYCKDLKDGSSNCT). A TIL 11 domain is found at 3180-3238 (CPAHSRYTNCLPSCPPLCLDPEGLCEGTSPKVPSTCREGCICQPGYLMHKNKCVLRIFC). Residues 3239-3294 (GCKNTQGAFISADKTWISRGCTQSCTCPAGAIHCRNFKCPSGTYCKNGDNGSSNCT) enclose the VWFC 11 domain. 2 N-linked (GlcNAc...) asparagine glycosylation sites follow: Asn-3288 and Asn-3292. The 56-residue stretch at 3300–3355 (CPTNSQFTDCLPSCVPSCSNRCEVTSPSVPSSCREGCLCNHGFVFSEDKCVPRTQC) folds into the TIL 12 domain. Residues 3356–3411 (GCKDARGAIIPAGKTWTSKGCTQSCACVEGNIQCQNFQCPPETYCKDNSEGSSTCT) enclose the VWFC 12 domain. A TIL 13 domain is found at 3417–3475 (CPAHTQYTSCLPSCLPSCLDPEGLCKDISPKVPSTCKEGCVCQSGYVLNSDKCVLRAEC). The VWFC 13 domain maps to 3476–3531 (DCKDAQGALIPAGKTWTSPGCTQSCACMGGAVQCQSSQCPPGTYCKDNEDGNSNCA). In terms of domain architecture, TIL 14 spans 3537-3595 (CPAHSLFTNCLPPCLPSCLDPDGLCKGASPKVPSTCKEGCICQSGYVLSNNKCLLRNRC). Residues 3596 to 3651 (GCKDAHGALIPEDKTWVSRGCTQSCVCTGGSIQCLSSQCPPGAYCKDNEDGSSNCA) form the VWFC 14 domain. Residues 3657-3715 (CPANSHYTDCFPPCPPSCSDPEGHCEASGPRVLSTCREGCLCNPGFVLDRDKCVPRVEC) form the TIL 15 domain. Residues 3716–3771 (GCKDAQGALIPSGKTWTSPGCTQSCACMGGVVQCQSSQCPPGTYCKDNEDGNSNCA) enclose the VWFC 15 domain. In terms of domain architecture, TIL 16 spans 3777 to 3835 (CPTHSNYTDCLPFCLPSCLDPSALCGGTSPKGPSTCKEGCVCQPGYVLDKDKCILKIEC). Asn-3782 carries an N-linked (GlcNAc...) asparagine glycan. The 56-residue stretch at 3836–3891 (GCRDTQGAVIPAGKTWLSTGCIQSCACVEGTIQCQNFQCPPGTYCNHNNNCAKIPL) folds into the VWFC 16 domain. The region spanning 3893-3951 (CPAHSHFTSCLPSCPPSCANLDGSCEQTSPKVPSTCKEGCLCQPGYFLNNGKCVLQTHC) is the TIL 17 domain. In terms of domain architecture, VWFC 17 spans 3952–4007 (DCKDAEGGLVPAGKTWTSKDCTQSCACTGGAVQCQNFQCPLGTYCKDSGDGSSNCT). An N-linked (GlcNAc...) asparagine glycan is attached at Asn-4005. The 59-residue stretch at 4029 to 4087 (CPAHSHFTSCLPSCPPSCSNLDGSCVESNFKAPSVCKKGCICQPGYLLNNDKCVLRIQC) folds into the TIL 18 domain. The region spanning 4088-4143 (GCKDTQGGLIPAGRTWISSDCTKSCSCMGGIIQCRDFQCPPGTYCKESNDSSRTCA) is the VWFC 18 domain. An N-linked (GlcNAc...) asparagine glycan is attached at Asn-4136. Residues 4149–4207 (CPAHSHYTNCLPACSRSCTDLDGHCEGTSPKVPSPCKEGCLCQPGYVVHNHKCVLQIHC) enclose the TIL 19 domain. The VWFC 19 domain maps to 4208 to 4262 (GCKDAQGGFVPAGKTWISRGCTQSCACVGGAVQCHNFTCPTGTQCQNSSCSKITV). N-linked (GlcNAc...) asparagine glycans are attached at residues Asn-4243 and Asn-4254. Residues 4264–4322 (CPAHSQYTTCLPSCLPSCFDPEGLCGGASPRAPSTCREGCVCEADYVLREDKCVLRTQC) form the TIL 20 domain. In terms of domain architecture, VWFC 20 spans 4323 to 4378 (GCKDAQGDLIPANKTWLTRGCAQKCTCKGGNIHCWNFKCPLGTECKDSVDGGSNCT). Asn-4335 and Asn-4376 each carry an N-linked (GlcNAc...) asparagine glycan. Residues 4384-4442 (CPAHSHHTYCLPSCIPSCSNVNDRCESTSLQRPSTCIEGCLCHSGFVFSKDKCVPRTQC) enclose the TIL 21 domain. In terms of domain architecture, VWFC 21 spans 4443–4498 (GCKDSQGTLIPAGKNWITTGCSQRCTCTGGLVQCHDFQCPSGAECQDIEDGNSNCV). The region spanning 4504–4562 (CPAHSHYSKCLPPCQPSCSDPDGHCEGTSPEAPSTCEEGCVCEPDYVLSNDKCVPSSEC) is the TIL 22 domain. One can recognise a VWFC 22 domain in the interval 4563 to 4618 (GCKDAHGVLIPESKTWVSRGCTKNCTCKGGTVQCHDFSCPTGSRCLDNNEGNSNCV). The N-linked (GlcNAc...) asparagine glycan is linked to Asn-4586. Residues 4624 to 4682 (CPAHSLYTNCLPSCLPSCSDPEGLCGGTSPEVPSTCKEGCICQSGYVLHKNKCMLRIHC) enclose the TIL 23 domain. Positions 4683 to 4738 (DCKDFQGSLIKTGQTWISSGCSKICTCKGGFFQCQSYKCPSGTQCEESEDGSSNCV) constitute a VWFC 23 domain. One can recognise a TIL 24 domain in the interval 4744-4802 (CPANSLYTHCLPTCLPSCSNPDGRCEGTSHKAPSTCREGCVCQPGYLLNKDTCVHKNQC). One can recognise a VWFC 24 domain in the interval 4803 to 4858 (GCKDIRGNIIPAGNTWISSDCTQSCACTDGVIQCQNFVCPSGSHCQYNEDGSSDCA). The region spanning 4863–5038 (ERCTIFGDPY…SWEVKAQHAF (176 aa)) is the VWFD 4 domain. Cys-4865 and Cys-5001 are joined by a disulfide. An N-linked (GlcNAc...) asparagine glycan is attached at Asn-5136. Positions 5150–5203 (CPANTVYQRCMTPCPASCAKFVTPKVCEGPCVEGCASLPGYIYSDTQSLPVTHC) constitute a TIL 25 domain. In terms of domain architecture, VWFC 25 spans 5204 to 5258 (GCTADGIYYKLGDSFVTNDCSQHCTCASQGILLCEPYGCRAGESCMVANFTRGCF). Asn-5252 carries N-linked (GlcNAc...) asparagine glycosylation. The EGF-like domain occupies 5259 to 5295 (QDSPCLQNPCHNDGRCEEQGATFICHCDFGYGGEFCT). Cystine bridges form between Cys-5263/Cys-5274, Cys-5268/Cys-5283, and Cys-5285/Cys-5294. A helical membrane pass occupies residues 5311 to 5337 (LVAILPGVLVMVLVPVLLPRVYVYMAT). Residues 5338-5376 (RTTMGRRRMKRKEKKLLRQSRLRLEDADVPEPTFKATEF) lie on the Cytoplasmic side of the membrane.

Probably forms covalent oligomers. In terms of tissue distribution, in testis, primarily in haploid spermatids.

Its subcellular location is the cell membrane. Functionally, binds in a species-specific manner to the zona pellucida of the egg. May be involved in gamete recognition and/or signaling. The polypeptide is Zonadhesin (Zan) (Mus musculus (Mouse)).